The chain runs to 460 residues: Proline--tRNA ligase (460 aa).

It belongs to the class-II aminoacyl-tRNA synthetase family. ProS type 3 subfamily. As to quaternary structure, homodimer.

It is found in the cytoplasm. It carries out the reaction tRNA(Pro) + L-proline + ATP = L-prolyl-tRNA(Pro) + AMP + diphosphate. Catalyzes the attachment of proline to tRNA(Pro) in a two-step reaction: proline is first activated by ATP to form Pro-AMP and then transferred to the acceptor end of tRNA(Pro). This Methanococcus maripaludis (strain DSM 14266 / JCM 13030 / NBRC 101832 / S2 / LL) protein is Proline--tRNA ligase.